Reading from the N-terminus, the 50-residue chain is Tubulin alpha chain (50 aa).

Position 28 (Asn28) interacts with GTP. Glu40 is an active-site residue.

The protein belongs to the tubulin family. In terms of assembly, dimer of alpha and beta chains. A typical microtubule is a hollow water-filled tube with an outer diameter of 25 nm and an inner diameter of 15 nM. Alpha-beta heterodimers associate head-to-tail to form protofilaments running lengthwise along the microtubule wall with the beta-tubulin subunit facing the microtubule plus end conferring a structural polarity. Microtubules usually have 13 protofilaments but different protofilament numbers can be found in some organisms and specialized cells. Mg(2+) serves as cofactor.

It is found in the cytoplasm. It localises to the cytoskeleton. It catalyses the reaction GTP + H2O = GDP + phosphate + H(+). Tubulin is the major constituent of microtubules, a cylinder consisting of laterally associated linear protofilaments composed of alpha- and beta-tubulin heterodimers. Microtubules grow by the addition of GTP-tubulin dimers to the microtubule end, where a stabilizing cap forms. Below the cap, tubulin dimers are in GDP-bound state, owing to GTPase activity of alpha-tubulin. This Populus euphratica (Euphrates poplar) protein is Tubulin alpha chain.